A 498-amino-acid chain; its full sequence is Putative antiporter subunit mnhD2 (498 aa).

Helical transmembrane passes span 2-22 (LSNL…ILVF), 32-52 (YLYL…LIYV), 78-98 (LSLI…AYGF), 108-128 (YHLP…FLTS), 130-150 (LFNL…LITL), 161-181 (IIYV…IGLL), 209-229 (ISLI…FMWL), 240-260 (LAAL…IRFF), 271-291 (IHPL…IGVI), 308-328 (IGFI…GAIF), 330-350 (LVND…LVYI), 368-388 (FFGV…PFSG), 403-423 (GNYI…YSLF), and 450-470 (GILS…PVLL).

The protein belongs to the CPA3 antiporters (TC 2.A.63) subunit D family. As to quaternary structure, may form a heterooligomeric complex that consists of seven subunits: mnhA2, mnhB2, mnhC2, mnhD2, mnhE2, mnhF2 and mnhG2.

The protein localises to the cell membrane. In Staphylococcus aureus (strain MRSA252), this protein is Putative antiporter subunit mnhD2 (mnhD2).